The sequence spans 544 residues: Tyrosine-protein kinase Yes (544 aa).

A lipid anchor (N-myristoyl glycine) is attached at Gly-2. One can recognise an SH3 domain in the interval 92–153 (GGVTFFVALY…PSNYVAPADS (62 aa)). Residues 159–256 (WYFGKLSRKD…GLCYKLTTVC (98 aa)) enclose the SH2 domain. The Protein kinase domain maps to 278-531 (LRLDVRLGQG…YIQSFLEDYF (254 aa)). ATP-binding positions include 284-292 (LGQGCFGEV) and Lys-306. Asp-397 acts as the Proton acceptor in catalysis. Tyr-427 is subject to Phosphotyrosine; by autocatalysis.

Belongs to the protein kinase superfamily. Tyr protein kinase family. SRC subfamily.

It carries out the reaction L-tyrosyl-[protein] + ATP = O-phospho-L-tyrosyl-[protein] + ADP + H(+). The chain is Tyrosine-protein kinase Yes (yes) from Xiphophorus hellerii (Green swordtail).